We begin with the raw amino-acid sequence, 627 residues long: MFGRGLPPLKFGQIGGDGWSTVLADPGNRLIVANAHRSEPRLRVETLIREELLTSRARIEDLERRNRAAHAALDRLAGKAVAIPLRAAAELKNVERPLEAAVELLEDMAERAHHEHEPAVVEDERCRKLSAGDQSGQDAGDDDDAGVIRILKNGSVIPLWKPRTGAKDFHVNFVTMAFAASGDGRVGFGSWYRALQSQLLDSSRGMERILGVSQDGRVSSRLVRAVIRVLRSAAEIYVGHRNYSAFEAAVMCLFQYDAAKRELADAKDGRGSSSGNEPRPASTFEEAIKLVPHYLRALQEDVRREWGAVSYAFDRTKLPQKFFSPVDAKKYSNGALSPHIVYRLFKARGVFAATGREVTKEEIATVDPDFSRFDDPIANLSLAFFPARRSPLSLHEDEPLMRAAIDAVALMMLLQRLMYNSDVYANSMANRFQAAAFFEGRVTGPVAPASGDVYGDRLSGDGDPIRAPGSRPPAAAEATLSGDGSRDVVSLDNNLVFLFDKYLCPMYRYDNRTEMTGFFPGLAAVCLVGKVRGVPSPSSAGDCCSSLINLVDLDLRKTENTGAGAAVVLTVHDAITYDMETGLSRLLSVFDVKKHMKPVLRAMNVETDSDLIYFLCLGCLPHHVTIA.

An interaction with major capsid protein/MCP region spans residues 1 to 56 (MFGRGLPPLKFGQIGGDGWSTVLADPGNRLIVANAHRSEPRLRVETLIREELLTSR). The segment at 458–480 (LSGDGDPIRAPGSRPPAAAEATL) is disordered.

Belongs to the herpesviridae CVC2 protein family. Heterodimerizes with CVC1. Interacts with major capsid protein/MCP and triplex capsid protein 1/TRX1 at the pentamer vertices. Interacts with the large tegument protein/LTP.

The protein localises to the virion. Its subcellular location is the host nucleus. Capsid vertex-specific component that plays a role during viral DNA encapsidation, assuring correct genome cleavage and presumably stabilizing capsids that contain full-length viral genomes. Participates in the interaction between the capsid and the tegument through interaction with the large tegument protein/LTP. This Psittacid herpesvirus 1 (isolate Amazon parrot/-/97-0001/1997) (PsHV-1) protein is Capsid vertex component 2.